The following is a 395-amino-acid chain: Ribonuclease D (395 aa).

The region spanning 14–181 (LITKSEDLAA…VYETLRDRLE (168 aa)) is the 3'-5' exonuclease domain. The HRDC domain occupies 219–300 (NRRYLGLLRA…AEARGLPDAD (82 aa)).

This sequence belongs to the RNase D family. It depends on a divalent metal cation as a cofactor.

It is found in the cytoplasm. The catalysed reaction is Exonucleolytic cleavage that removes extra residues from the 3'-terminus of tRNA to produce 5'-mononucleotides.. In terms of biological role, exonuclease involved in the 3' processing of various precursor tRNAs. Initiates hydrolysis at the 3'-terminus of an RNA molecule and releases 5'-mononucleotides. In Granulibacter bethesdensis (strain ATCC BAA-1260 / CGDNIH1), this protein is Ribonuclease D.